The chain runs to 312 residues: tRNA dimethylallyltransferase (312 aa).

10-17 (GPTGVGKT) is an ATP binding site. 12 to 17 (TGVGKT) lines the substrate pocket.

This sequence belongs to the IPP transferase family. As to quaternary structure, monomer. The cofactor is Mg(2+).

It catalyses the reaction adenosine(37) in tRNA + dimethylallyl diphosphate = N(6)-dimethylallyladenosine(37) in tRNA + diphosphate. Its function is as follows. Catalyzes the transfer of a dimethylallyl group onto the adenine at position 37 in tRNAs that read codons beginning with uridine, leading to the formation of N6-(dimethylallyl)adenosine (i(6)A). This chain is tRNA dimethylallyltransferase, found in Coprothermobacter proteolyticus (strain ATCC 35245 / DSM 5265 / OCM 4 / BT).